Here is a 280-residue protein sequence, read N- to C-terminus: Fructose-1,6-bisphosphatase/inositol-1-monophosphatase (280 aa).

The Mg(2+) site is built by glutamate 73, aspartate 94, leucine 96, and aspartate 97. Residues 97 to 99 (DGT), arginine 195, valine 200, and arginine 219 contribute to the substrate site. Residue aspartate 226 coordinates Mg(2+).

Belongs to the inositol monophosphatase superfamily. FBPase class 4 family. Mg(2+) is required as a cofactor.

The enzyme catalyses beta-D-fructose 1,6-bisphosphate + H2O = beta-D-fructose 6-phosphate + phosphate. It carries out the reaction a myo-inositol phosphate + H2O = myo-inositol + phosphate. In terms of biological role, phosphatase with broad specificity; it can dephosphorylate fructose 1,6-bisphosphate, and both D and L isomers of inositol-1-phosphate (I-1-P). The sequence is that of Fructose-1,6-bisphosphatase/inositol-1-monophosphatase (suhB) from Methanothermobacter thermautotrophicus (strain ATCC 29096 / DSM 1053 / JCM 10044 / NBRC 100330 / Delta H) (Methanobacterium thermoautotrophicum).